A 469-amino-acid chain; its full sequence is MLQIYNTLSRQKETFTPINAGKVGLYVCGCTVYDLCHIGHGRTYISFDNIARYLRFSGYDVNYVRNITDVEDKIINRANENNETTEALTERTIAAMHQDFDSLNMARPDLEPRVTTHMNEIIAMIETLVTKEHAYVAGANAASTGQGDVLFDVSSYNDYGKLSGQNLEQLQSGSRVEVDQNKNNPLDFVLWKSAKPGEPSWSSPWGEGRPGWHIECSAMNAKELGHHFDIHGGGSDLTFPHHENEIAQSCCALNTPYVNYWMHTGMVQVDQEKMSKSLGNFFTIRDVLAQYDAETVRFFLTTGHYRSQLNYSTDNLTQARASVERIYTSLRDVNIESDYVINKDSSFVKQFCQAMDDDFNTPQALAVLFEISKELNVAKAAANNALAIDLASTLVALGEIVGLLQLDPAAFLQGDNDNDEVAIIEALIVQRNQARIDKDWAMADDARDKLNAMNIVLEDSAGKTTWRKA.

C28 provides a ligand contact to Zn(2+). A 'HIGH' region motif is present at residues 30 to 40; sequence CTVYDLCHIGH. Zn(2+)-binding residues include C216, H241, and E245. Positions 273–277 match the 'KMSKS' region motif; sequence KMSKS. K276 is an ATP binding site.

It belongs to the class-I aminoacyl-tRNA synthetase family. As to quaternary structure, monomer. It depends on Zn(2+) as a cofactor.

The protein localises to the cytoplasm. The enzyme catalyses tRNA(Cys) + L-cysteine + ATP = L-cysteinyl-tRNA(Cys) + AMP + diphosphate. The polypeptide is Cysteine--tRNA ligase (Colwellia psychrerythraea (strain 34H / ATCC BAA-681) (Vibrio psychroerythus)).